We begin with the raw amino-acid sequence, 164 residues long: UBA-like domain-containing protein 2 (164 aa).

An N-acetylserine modification is found at serine 2. The tract at residues 144–164 is disordered; the sequence is PPGASQGGAPQKAMAAMDGQR.

Belongs to the UBALD family.

In Mus musculus (Mouse), this protein is UBA-like domain-containing protein 2 (Ubald2).